The chain runs to 250 residues: Ubiquinone/menaquinone biosynthesis C-methyltransferase UbiE (250 aa).

S-adenosyl-L-methionine is bound by residues threonine 74, aspartate 94, 122–123 (DA), and serine 139.

Belongs to the class I-like SAM-binding methyltransferase superfamily. MenG/UbiE family.

It catalyses the reaction a 2-demethylmenaquinol + S-adenosyl-L-methionine = a menaquinol + S-adenosyl-L-homocysteine + H(+). The enzyme catalyses a 2-methoxy-6-(all-trans-polyprenyl)benzene-1,4-diol + S-adenosyl-L-methionine = a 5-methoxy-2-methyl-3-(all-trans-polyprenyl)benzene-1,4-diol + S-adenosyl-L-homocysteine + H(+). It participates in quinol/quinone metabolism; menaquinone biosynthesis; menaquinol from 1,4-dihydroxy-2-naphthoate: step 2/2. Its pathway is cofactor biosynthesis; ubiquinone biosynthesis. Its function is as follows. Methyltransferase required for the conversion of demethylmenaquinol (DMKH2) to menaquinol (MKH2) and the conversion of 2-polyprenyl-6-methoxy-1,4-benzoquinol (DDMQH2) to 2-polyprenyl-3-methyl-6-methoxy-1,4-benzoquinol (DMQH2). This Paracoccus denitrificans (strain Pd 1222) protein is Ubiquinone/menaquinone biosynthesis C-methyltransferase UbiE.